The following is a 201-amino-acid chain: Large ribosomal subunit protein uL4 (201 aa).

Positions 43–69 (TKAQKGRSDVSGGGAKPWKQKGSGRAR) are disordered.

The protein belongs to the universal ribosomal protein uL4 family. In terms of assembly, part of the 50S ribosomal subunit.

Its function is as follows. One of the primary rRNA binding proteins, this protein initially binds near the 5'-end of the 23S rRNA. It is important during the early stages of 50S assembly. It makes multiple contacts with different domains of the 23S rRNA in the assembled 50S subunit and ribosome. Forms part of the polypeptide exit tunnel. The chain is Large ribosomal subunit protein uL4 from Thioalkalivibrio sulfidiphilus (strain HL-EbGR7).